A 434-amino-acid polypeptide reads, in one-letter code: ATP-dependent protease ATPase subunit HslU (434 aa).

ATP-binding positions include I18, 60–65 (GVGKTE), D247, E312, and R384.

This sequence belongs to the ClpX chaperone family. HslU subfamily. A double ring-shaped homohexamer of HslV is capped on each side by a ring-shaped HslU homohexamer. The assembly of the HslU/HslV complex is dependent on binding of ATP.

Its subcellular location is the cytoplasm. ATPase subunit of a proteasome-like degradation complex; this subunit has chaperone activity. The binding of ATP and its subsequent hydrolysis by HslU are essential for unfolding of protein substrates subsequently hydrolyzed by HslV. HslU recognizes the N-terminal part of its protein substrates and unfolds these before they are guided to HslV for hydrolysis. The sequence is that of ATP-dependent protease ATPase subunit HslU from Brucella melitensis biotype 2 (strain ATCC 23457).